The chain runs to 99 residues: Bacterial microcompartment protein homohexamer (99 aa).

The region spanning Ala4–Pro88 is the BMC domain.

The protein belongs to the bacterial microcompartments protein family. Homohexamer with a small central pore. When purified protein is examined by atomic force microscopy it dynamically makes uniform patches about 35 Angstroms thick with hexamers in the same orientation. In the BMC the concave side faces outward, with the N- and C-terminii exposed to the cytoplasm.

It is found in the bacterial microcompartment. Its function is as follows. The only hexameric shell protein in this bacterium, it forms the majority of the bacterial microcompartment (BMC) shell. Expression of 5 proteins in E.coli (BMC-H (Hoch_5815), BMC-P (Hoch_5814), and 3 BMC-T (Hoch_5812, Hoch_5816, Hoch_3341)) forms a 40 nm artificial BMC with a molecular mass of 6.5 MDa. There are 60 BMC-H hexamers per BMC. The shell facets are 20-30 Angstroms thick (a single hexamer layer), with 1 of BMC-T trimers protruding to the exterior. The chain is Bacterial microcompartment protein homohexamer from Haliangium ochraceum (strain DSM 14365 / JCM 11303 / SMP-2).